A 334-amino-acid polypeptide reads, in one-letter code: D-alanine--D-alanine ligase (334 aa).

Positions 124 to 329 (KMWFSALGIP…FAQYLSGNIL (206 aa)) constitute an ATP-grasp domain. 154–209 (ALAKWGSIFIKAASQGSSVGCYRVDSIEQLASSLEEAFTFSPYVVIEKTITARELE) is an ATP binding site. The Mg(2+) site is built by D283, E296, and N298.

It belongs to the D-alanine--D-alanine ligase family. Mg(2+) serves as cofactor. The cofactor is Mn(2+).

The protein localises to the cytoplasm. It catalyses the reaction 2 D-alanine + ATP = D-alanyl-D-alanine + ADP + phosphate + H(+). It functions in the pathway cell wall biogenesis; peptidoglycan biosynthesis. Functionally, cell wall formation. In Shewanella pealeana (strain ATCC 700345 / ANG-SQ1), this protein is D-alanine--D-alanine ligase.